The sequence spans 114 residues: Ribonuclease P protein component (114 aa).

The protein belongs to the RnpA family. In terms of assembly, consists of a catalytic RNA component (M1 or rnpB) and a protein subunit.

The catalysed reaction is Endonucleolytic cleavage of RNA, removing 5'-extranucleotides from tRNA precursor.. In terms of biological role, RNaseP catalyzes the removal of the 5'-leader sequence from pre-tRNA to produce the mature 5'-terminus. It can also cleave other RNA substrates such as 4.5S RNA. The protein component plays an auxiliary but essential role in vivo by binding to the 5'-leader sequence and broadening the substrate specificity of the ribozyme. The protein is Ribonuclease P protein component of Legionella pneumophila (strain Lens).